The following is a 215-amino-acid chain: Thymidylate kinase (215 aa).

10–17 (GGEGVGKT) is an ATP binding site.

This sequence belongs to the thymidylate kinase family.

It carries out the reaction dTMP + ATP = dTDP + ADP. Functionally, phosphorylation of dTMP to form dTDP in both de novo and salvage pathways of dTTP synthesis. The chain is Thymidylate kinase from Bartonella henselae (strain ATCC 49882 / DSM 28221 / CCUG 30454 / Houston 1) (Rochalimaea henselae).